A 318-amino-acid chain; its full sequence is GTP cyclohydrolase MptA (318 aa).

It belongs to the GTP cyclohydrolase IV family. In terms of assembly, homodimer. Fe(2+) serves as cofactor.

It carries out the reaction GTP + H2O = 7,8-dihydroneopterin 2',3'-cyclic phosphate + formate + diphosphate + H(+). It participates in cofactor biosynthesis; 5,6,7,8-tetrahydromethanopterin biosynthesis. In terms of biological role, converts GTP to 7,8-dihydro-D-neopterin 2',3'-cyclic phosphate, the first intermediate in the biosynthesis of coenzyme methanopterin. The polypeptide is GTP cyclohydrolase MptA (Methanosarcina acetivorans (strain ATCC 35395 / DSM 2834 / JCM 12185 / C2A)).